Consider the following 459-residue polypeptide: Probable ECA polymerase (459 aa).

11 consecutive transmembrane segments (helical) span residues 3–23 (LTQF…ILTL), 37–57 (IFFS…TCLL), 65–85 (VVPV…YGIY), 119–139 (LASV…FLLF), 154–174 (GVAL…VYFL), 181–201 (WLFF…VVGG), 206–226 (IIIA…ITLW), 227–247 (MLVT…LKRY), 340–360 (LVVM…GLII), 377–397 (YKAA…IVLA), and 409–429 (VFFC…YWLF).

This sequence belongs to the WzyE family. Probably part of a complex composed of WzxE, WzyE and WzzE.

It is found in the cell inner membrane. Its pathway is bacterial outer membrane biogenesis; enterobacterial common antigen biosynthesis. Functionally, probably involved in the polymerization of enterobacterial common antigen (ECA) trisaccharide repeat units. The sequence is that of Probable ECA polymerase from Photorhabdus laumondii subsp. laumondii (strain DSM 15139 / CIP 105565 / TT01) (Photorhabdus luminescens subsp. laumondii).